Here is a 120-residue protein sequence, read N- to C-terminus: Histone H2B (120 aa).

The segment at 1–26 (MAEPAKKKPKKLPKKDKGQKDIKRKK) is disordered. Alanine 2 carries the blocked amino end (Ala) modification. N6-acetyllysine is present on residues lysine 7, lysine 10, and lysine 11. Residue lysine 115 forms a Glycyl lysine isopeptide (Lys-Gly) (interchain with G-Cter in ubiquitin) linkage.

Belongs to the histone H2B family. As to quaternary structure, the nucleosome is a histone octamer containing two molecules each of H2A, H2B, H3 and H4 assembled in one H3-H4 heterotetramer and two H2A-H2B heterodimers. The octamer wraps approximately 147 bp of DNA. Can be acetylated to form H2BK6ac, H2BK33ac and H2BK34ac. Post-translationally, monoubiquitinated to form H2BK143ub1; may give a specific tag for epigenetic transcriptional activation.

The protein localises to the nucleus. It localises to the chromosome. In terms of biological role, core component of nucleosome. Nucleosomes wrap and compact DNA into chromatin, limiting DNA accessibility to the cellular machineries which require DNA as a template. Histones thereby play a central role in transcription regulation, DNA repair, DNA replication and chromosomal stability. DNA accessibility is regulated via a complex set of post-translational modifications of histones, also called histone code, and nucleosome remodeling. The protein is Histone H2B of Pisum sativum (Garden pea).